A 957-amino-acid polypeptide reads, in one-letter code: Valine--tRNA ligase (957 aa).

Positions 47 to 57 match the 'HIGH' region motif; that stretch reads PNITGQLHLGH. A 'KMSKS' region motif is present at residues 558–562; the sequence is KMSKS. Lys561 provides a ligand contact to ATP. The stretch at 889–918 forms a coiled coil; that stretch reads FNKENEINRLKKESELINRKIETIQKLLDD.

Belongs to the class-I aminoacyl-tRNA synthetase family. ValS type 1 subfamily. In terms of assembly, monomer.

It is found in the cytoplasm. It carries out the reaction tRNA(Val) + L-valine + ATP = L-valyl-tRNA(Val) + AMP + diphosphate. In terms of biological role, catalyzes the attachment of valine to tRNA(Val). As ValRS can inadvertently accommodate and process structurally similar amino acids such as threonine, to avoid such errors, it has a 'posttransfer' editing activity that hydrolyzes mischarged Thr-tRNA(Val) in a tRNA-dependent manner. The polypeptide is Valine--tRNA ligase (Blochmanniella pennsylvanica (strain BPEN)).